The primary structure comprises 396 residues: Phosphoglycerate kinase (396 aa).

Residues 21 to 23 (DFN), Arg-36, 59 to 62 (HLGK), Arg-119, and Arg-156 each bind substrate. Residues Lys-206, Gly-294, Glu-325, and 352–355 (GGDS) contribute to the ATP site.

Belongs to the phosphoglycerate kinase family. As to quaternary structure, monomer.

Its subcellular location is the cytoplasm. It catalyses the reaction (2R)-3-phosphoglycerate + ATP = (2R)-3-phospho-glyceroyl phosphate + ADP. Its pathway is carbohydrate degradation; glycolysis; pyruvate from D-glyceraldehyde 3-phosphate: step 2/5. This is Phosphoglycerate kinase from Staphylococcus aureus (strain bovine RF122 / ET3-1).